The primary structure comprises 716 residues: Probable calcium-binding mitochondrial carrier K02F3.2 (716 aa).

An N-terminal domain region spans residues 1–345 (MSFDHLLTSS…CLKDIQAIDP (345 aa)). EF-hand domains follow at residues 93–121 (YNKETVRLLASAADTTKDGDISFEEFCAF), 127–162 (SPDALYLTAFELFDRNASDTISCDEFEAVIRHTQPL), 165–195 (QDFDFSSEFIKRYFGADKQRNVNYHSFCQLL), and 198–233 (FYEEQGIQAFKRYDKNGNGTISSLDFQQIMTTVKGH). Residues D106, T108, D110, E117, D140, N142, S144, T146, and E151 each contribute to the Ca(2+) site. 5 residues coordinate Ca(2+): D211, N213, N215, T217, and D222. Residues 346–362 (ERLKRVSQMDRLINIKA) form a linker loop domain region. The tract at residues 372–664 (GTAFLESAYR…RLFYVDFAGS (293 aa)) is carrier domain. Solcar repeat units lie at residues 376–468 (LESA…MRDK), 475–560 (IPLY…AKLA), and 568–656 (NSPG…LQRL). The next 6 helical transmembrane spans lie at 382 to 399 (FLLGSVAGACGATAVYPI), 443 to 462 (GLLPQIVGVAPEKAIKLTMN), 485 to 498 (GTGGMCQVVFTNPL), 535 to 554 (GSRACFLRDIPFSAIYFPAY), 574 to 591 (FASAFIAGVPAAGLVTPA), and 631 to 650 (GTAARVCRSSPQFAVTLLTY). The segment at 665-716 (RPTGSELATTKTIQDESSTNPDHVGGYKLAAATFSGIEHKFGLFLPKFETSK) is C-terminal domain.

The protein belongs to the mitochondrial carrier (TC 2.A.29) family. Homodimer (via N-terminus).

Its subcellular location is the mitochondrion inner membrane. Its function is as follows. Mitochondrial and calcium-binding carrier that catalyzes the calcium-dependent exchange of cytoplasmic glutamate with mitochondrial aspartate across the mitochondrial inner membrane. This chain is Probable calcium-binding mitochondrial carrier K02F3.2, found in Caenorhabditis elegans.